Reading from the N-terminus, the 859-residue chain is MERGRNQLLIAILLASACLIYCRQQYVTVFYGVPAWKNASIPLFCATKNRDTWGTIQCLPDNDDYQEIPLNVTEAFDAWDNTITEQAIEDVWNLFETSIKPCVKLTPLCVAMKCNISTSDTTMIRTTTPSTAKEAPISDNSPCIRTNNCSGLEEEKIVKCHFNMTGLERDKKKQYNETWYSSDVVCDNSTDQTTNETTCYMNHCNTSVITESCDKHYWDAMRFRYCAPPGFAILRCNDTKYSGFAPNCSKVVASTCTRMMETQTSTWFGFNGTRAENRTYIYWHGKDNRTIISLNKHYNLSMYCRRPGNKTVVPITLMSGQRFHSRPIINKRPRQAWCWFKGNWTEAMQEVKQTLAEHPRYKGTKNITDITFKAPERGSDPEVTYMWSNCRGEFFYCNMTWFLNWVENKPNTTKRNYAPCHIRQIINTWHKVGKNVYLPPREGELTCNSTVTSIIANIDERDNQTTNITFSADVAELYRLELGDYKLVEITPIGFAPTSQKRYSPAHGRPKRGAFVLGFLGFLTTAGVAMGTASLTLSAQSRTLLAGIVQQQQQLLDVVKRQQELLRLTVWGTKILQARVTAIEKYLKDQAQLNSWGCAFRQVCHTTVPWANESLTPDWNNMTWQEWEQKVRYLEANISQSLEEAQLQQEKNMYELQKLNNWDVFTNWFDLTSWISYIQYGVYIVVGIIVLRIVIYVVQMLSRLRKGYRPVFSSSPGYIQQIHIHKDPEQPASEETEEDVGGNGGDRSWPWQIEYIHFLIRQLIRLLTGLYNICRNLLSRIFQTLQPILQNLRDWLRPKVAFLQYGCEWIQEAFQAAARAARETLAGACRDVWGMLQRIGRGILAVPRRIRQGAELALL.

Residues methionine 1–glutamine 24 form the signal peptide. The Extracellular segment spans residues glutamine 25–tyrosine 680. The N-linked (GlcNAc...) asparagine; by host glycan is linked to asparagine 38. Cysteines 45 and 58 form a disulfide. N-linked (GlcNAc...) asparagine; by host glycans are attached at residues asparagine 71, asparagine 115, asparagine 148, asparagine 163, asparagine 176, asparagine 188, asparagine 195, asparagine 205, asparagine 237, asparagine 247, asparagine 271, asparagine 277, asparagine 288, asparagine 299, asparagine 309, asparagine 343, asparagine 366, asparagine 398, asparagine 411, asparagine 448, asparagine 463, and asparagine 467. Intrachain disulfides connect cysteine 102–cysteine 213, cysteine 109–cysteine 204, cysteine 114–cysteine 160, cysteine 226–cysteine 256, and cysteine 236–cysteine 248. Residues cysteine 114–lysine 159 are V1. The interval cysteine 160–cysteine 204 is V2. Residues cysteine 304–tryptophan 337 form a V3 region. A disulfide bridge links cysteine 304 with cysteine 338. 2 disulfides stabilise this stretch: cysteine 390-cysteine 447 and cysteine 397-cysteine 420. The segment at cysteine 397–cysteine 420 is V4. Positions asparagine 463 to phenylalanine 470 are V5. The tract at residues glycine 513–alanine 533 is fusion peptide. An immunosuppression region spans residues leucine 576–glutamine 592. 3 N-linked (GlcNAc...) asparagine; by host glycosylation sites follow: asparagine 612, asparagine 621, and asparagine 637. Residues glutamine 625–glutamine 646 adopt a coiled-coil conformation. The MPER; binding to GalCer stretch occupies residues lysine 658 to glutamine 679. The chain crosses the membrane as a helical span at residues glycine 681–leucine 701. Over serine 702–leucine 859 the chain is Cytoplasmic. The YXXV motif; contains endocytosis signal signature appears at tyrosine 708–valine 711. A disordered region spans residues lysine 726–glycine 745. The S-palmitoyl cysteine; by host moiety is linked to residue cysteine 774. The short motif at leucine 858 to leucine 859 is the Di-leucine internalization motif element.

As to quaternary structure, the mature envelope protein (Env) consists of a homotrimer of non-covalently associated gp120-gp41 heterodimers. The resulting complex protrudes from the virus surface as a spike. There seems to be as few as 10 spikes on the average virion. Interacts with human CD4, CCR5 and CXCR4, to form a P4HB/PDI-CD4-CXCR4-gp120 complex. Gp120 also interacts with the C-type lectins CD209/DC-SIGN and CLEC4M/DC-SIGNR (collectively referred to as DC-SIGN(R)). Gp120 and gp41 interact with GalCer. The mature envelope protein (Env) consists of a homotrimer of non-covalently associated gp120-gp41 heterodimers. The resulting complex protrudes from the virus surface as a spike. There seems to be as few as 10 spikes on the average virion. Post-translationally, specific enzymatic cleavages in vivo yield mature proteins. Envelope glycoproteins are synthesized as an inactive precursor that is heavily N-glycosylated and processed likely by host cell furin in the Golgi to yield the mature SU and TM proteins. The cleavage site between SU and TM requires the minimal sequence [KR]-X-[KR]-R. Palmitoylation of the transmembrane protein and of Env polyprotein (prior to its proteolytic cleavage) is essential for their association with host cell membrane lipid rafts. Palmitoylation is therefore required for envelope trafficking to classical lipid rafts, but not for viral replication.

Its subcellular location is the virion membrane. It localises to the host cell membrane. It is found in the host endosome membrane. In terms of biological role, the surface protein gp120 (SU) attaches the virus to the host lymphoid cell by binding to the primary receptor CD4. This interaction induces a structural rearrangement creating a high affinity binding site for a chemokine coreceptor like CXCR4 and/or CCR5. This peculiar 2 stage receptor-interaction strategy allows gp120 to maintain the highly conserved coreceptor-binding site in a cryptic conformation, protected from neutralizing antibodies. Since CD4 also displays a binding site for the disulfide-isomerase P4HB/PDI, a P4HB/PDI-CD4-CXCR4-gp120 complex may form. In that complex, P4HB/PDI could reach and reduce gp120 disulfide bonds, causing major conformational changes in gp120. TXN, another PDI family member could also be involved in disulfide rearrangements in Env during fusion. These changes are transmitted to the transmembrane protein gp41 and are thought to activate its fusogenic potential by unmasking its fusion peptide. The surface protein gp120 is a ligand for CD209/DC-SIGN and CLEC4M/DC-SIGNR, which are respectively found on dendritic cells (DCs), and on endothelial cells of liver sinusoids and lymph node sinuses. These interactions allow capture of viral particles at mucosal surfaces by these cells and subsequent transmission to permissive cells. DCs are professional antigen presenting cells, critical for host immunity by inducing specific immune responses against a broad variety of pathogens. They act as sentinels in various tissues where they take up antigen, process it, and present it to T-cells following migration to lymphoid organs. HIV subverts the migration properties of dendritic cells to gain access to CD4+ T-cells in lymph nodes. Virus transmission to permissive T-cells occurs either in trans (without DCs infection, through viral capture and transmission), or in cis (following DCs productive infection, through the usual CD4-gp120 interaction), thereby inducing a robust infection. In trans infection, bound virions remain infectious over days and it is proposed that they are not degraded, but protected in non-lysosomal acidic organelles within the DCs close to the cell membrane thus contributing to the viral infectious potential during DCs' migration from the periphery to the lymphoid tissues. On arrival at lymphoid tissues, intact virions recycle back to DCs' cell surface allowing virus transmission to CD4+ T-cells. Virion capture also seems to lead to MHC-II-restricted viral antigen presentation, and probably to the activation of HIV-specific CD4+ cells. Functionally, the transmembrane protein gp41 (TM) acts as a class I viral fusion protein. Under the current model, the protein has at least 3 conformational states: pre-fusion native state, pre-hairpin intermediate state, and post-fusion hairpin state. During fusion of viral and target intracellular membranes, the coiled coil regions (heptad repeats) assume a trimer-of-hairpins structure, positioning the fusion peptide in close proximity to the C-terminal region of the ectodomain. The formation of this structure appears to drive apposition and subsequent fusion of viral and target cell membranes. Complete fusion occurs in host cell endosomes and is dynamin-dependent, however some lipid transfer might occur at the plasma membrane. The virus undergoes clathrin-dependent internalization long before endosomal fusion, thus minimizing the surface exposure of conserved viral epitopes during fusion and reducing the efficacy of inhibitors targeting these epitopes. Membranes fusion leads to delivery of the nucleocapsid into the cytoplasm. Its function is as follows. The envelope glycoprotein gp160 precursor down-modulates cell surface CD4 antigen by interacting with it in the endoplasmic reticulum and blocking its transport to the cell surface. In terms of biological role, the gp120-gp41 heterodimer seems to contribute to T-cell depletion during HIV-1 infection. The envelope glycoproteins expressed on the surface of infected cells induce apoptosis through an interaction with uninfected cells expressing the receptor (CD4) and the coreceptors CXCR4 or CCR5. This type of bystander killing may be obtained by at least three distinct mechanisms. First, the interaction between the 2 cells can induce cellular fusion followed by nuclear fusion within the syncytium. Syncytia are condemned to die from apoptosis. Second, the 2 interacting cells may not fuse entirely and simply exchange plasma membrane lipids, after a sort of hemifusion process, followed by rapid death. Third, it is possible that virus-infected cells, on the point of undergoing apoptosis, fuse with CD4-expressing cells, in which case apoptosis is rapidly transmitted from one cell to the other and thus occurs in a sort of contagious fashion. The gp120-gp41 heterodimer allows rapid transcytosis of the virus through CD4 negative cells such as simple epithelial monolayers of the intestinal, rectal and endocervical epithelial barriers. Both gp120 and gp41 specifically recognize glycosphingolipids galactosyl-ceramide (GalCer) or 3' sulfo-galactosyl-ceramide (GalS) present in the lipid rafts structures of epithelial cells. Binding to these alternative receptors allows the rapid transcytosis of the virus through the epithelial cells. This transcytotic vesicle-mediated transport of virions from the apical side to the basolateral side of the epithelial cells does not involve infection of the cells themselves. The sequence is that of Envelope glycoprotein gp160 (env) from Human immunodeficiency virus type 2 subtype A (isolate CAM2) (HIV-2).